Reading from the N-terminus, the 355-residue chain is Protein-tyrosine sulfotransferase 1 (355 aa).

The Cytoplasmic portion of the chain corresponds to 1–8 (MIGKLKQN). A helical; Signal-anchor for type II membrane protein membrane pass occupies residues 9–25 (LLVACLVISSVTVFYLC). Over 26-355 (RHAMDCHHRI…QKSPEKPNPS (330 aa)) the chain is Lumenal. N-linked (GlcNAc...) asparagine glycosylation is present at N55. 76-80 (RSGTT) serves as a coordination point for 3'-phosphoadenylyl sulfate. A disulfide bond links C94 and C154. Catalysis depends on E97, which acts as the Proton donor/acceptor. An interaction with peptide substrate region spans residues 99-103 (RVIPR). 3'-phosphoadenylyl sulfate-binding residues include R181, S189, and R193. An intrachain disulfide couples C223 to C230. Residues Y235, 282–291 (STDQVIKPVN), and K297 each bind 3'-phosphoadenylyl sulfate. The tract at residues 325-355 (HANPPNYGRPDPLVLDNTRRLQKSPEKPNPS) is disordered. A compositionally biased stretch (basic and acidic residues) spans 341–355 (NTRRLQKSPEKPNPS).

This sequence belongs to the protein sulfotransferase family.

It localises to the golgi apparatus membrane. The enzyme catalyses L-tyrosyl-[protein] + 3'-phosphoadenylyl sulfate = O-sulfo-L-tyrosine-[protein] + adenosine 3',5'-bisphosphate + H(+). Functionally, catalyzes the O-sulfation of tyrosine residues within acidic motifs of polypeptides, using 3'-phosphoadenylyl sulfate (PAPS) as cosubstrate. The protein is Protein-tyrosine sulfotransferase 1 (tpst1) of Danio rerio (Zebrafish).